A 63-amino-acid chain; its full sequence is Small ribosomal subunit protein bS21 (63 aa).

Belongs to the bacterial ribosomal protein bS21 family.

The chain is Small ribosomal subunit protein bS21 from Bacteroides fragilis (strain ATCC 25285 / DSM 2151 / CCUG 4856 / JCM 11019 / LMG 10263 / NCTC 9343 / Onslow / VPI 2553 / EN-2).